A 128-amino-acid chain; its full sequence is Fluoride-specific ion channel FluC (128 aa).

A run of 4 helical transmembrane segments spans residues 8–28 (IIFI…LGLL), 38–58 (LGTL…LAFF), 71–91 (FFVT…AEVI), and 103–123 (LMLA…GVFI). Residues Gly78 and Thr81 each contribute to the Na(+) site.

The protein belongs to the fluoride channel Fluc/FEX (TC 1.A.43) family.

The protein resides in the cell inner membrane. The catalysed reaction is fluoride(in) = fluoride(out). Its activity is regulated as follows. Na(+) is not transported, but it plays an essential structural role and its presence is essential for fluoride channel function. Functionally, fluoride-specific ion channel. Important for reducing fluoride concentration in the cell, thus reducing its toxicity. The sequence is that of Fluoride-specific ion channel FluC from Pasteurella multocida (strain Pm70).